Reading from the N-terminus, the 30-residue chain is Varv peptide G (30 aa).

A cross-link (cyclopeptide (Gly-Asn)) is located at residues 1-30 (GVPVCGETCFGGTCNTPGCSCDPWPVCSRN). Disulfide bonds link Cys5-Cys19, Cys9-Cys21, and Cys14-Cys27.

This is a cyclic peptide.

Functionally, probably participates in a plant defense mechanism. This Viola arvensis (European field pansy) protein is Varv peptide G.